Reading from the N-terminus, the 446-residue chain is MAVNPLLTPTGQQTIPLIPSPFGPPTVDRDVLPSTVAPTDPRQFCVPSQFGSSVLPNTNMANVLSSRIYPGWGILPPESIKAVARRNEMIQRHHTARTEMEMYAIYQQRRMEKINPKGLAGLGIPFLYGSSVPAAPAAYHGRSMLPAGDLHFHRSTLRNLQGNPMLAATAPHFEESWGQRCRRLRKNTGNQKALDSDAESSKSQAEEKILGQTHAVPYEEDHYAKDPDIEAPSNQKSSETNEKPTTALANTCGELEPTHRKPWGSHTTTLKAKAWDDGKEEASEQIFATCDEKNGVCPPVPRPSLPGTHALVTIGGNLSLDEDIQKWTVDDVHSFIRSLPGCSDYAQVFKDHAIDGETLPLLTEEHLRGTMGLKLGPALKIQSQVSQHVGSMFYKKTLSFPIRQAFDQPADTSPLLDPNSWSDTMNIFCPQDTIIPKGIERGSMRN.

Residues 94–168 (HTARTEMEMY…NLQGNPMLAA (75 aa)) are required for localization to nuclear polycomb bodies. Disordered regions lie at residues 187-207 (NTGNQKALDSDAESSKSQAEE) and 225-277 (KDPD…AWDD). Polar residues predominate over residues 232 to 249 (PSNQKSSETNEKPTTALA). The 66-residue stretch at 327 to 392 (WTVDDVHSFI…SQVSQHVGSM (66 aa)) folds into the SAM domain.

Monomer, homodimer and homooligomer. Component of a Polycomb group (PcG) multiprotein PRC1-like complex. Interacts with PHC2, NR2E3 and SAMD11. Interacts with RNF1 in a PHC2-dependent manner. In terms of tissue distribution, expressed in the retina (at protein level). Expressed in the retinal inner and outer nuclear layers.

The protein resides in the nucleus. It is found in the cytoplasm. Functionally, component of a Polycomb group (PcG) multiprotein PRC1-like complex, essential for establishing rod photoreceptor cell identity and function by silencing nonrod gene expression in developing rod photoreceptor cells. Via its association with the PRC1-like complex, promotes epigenetic repressive marks H3K27me3 and H2AK119ub marks in nonrod genes, silencing their transcription. Represses Crx-controlled photoreceptor-specific gene expression. The polypeptide is Sterile alpha motif domain-containing protein 7 (SAMD7) (Homo sapiens (Human)).